The sequence spans 604 residues: Elongation factor 4 (604 aa).

A tr-type G domain is found at E4–K186. Residues D16–T21 and N133–D136 contribute to the GTP site.

Belongs to the TRAFAC class translation factor GTPase superfamily. Classic translation factor GTPase family. LepA subfamily.

The protein resides in the cell inner membrane. It carries out the reaction GTP + H2O = GDP + phosphate + H(+). Its function is as follows. Required for accurate and efficient protein synthesis under certain stress conditions. May act as a fidelity factor of the translation reaction, by catalyzing a one-codon backward translocation of tRNAs on improperly translocated ribosomes. Back-translocation proceeds from a post-translocation (POST) complex to a pre-translocation (PRE) complex, thus giving elongation factor G a second chance to translocate the tRNAs correctly. Binds to ribosomes in a GTP-dependent manner. The chain is Elongation factor 4 from Solibacter usitatus (strain Ellin6076).